The primary structure comprises 410 residues: Neuroserpin (410 aa).

The first 16 residues, 1 to 16 (MAYLGLLSLVALQSLV), serve as a signal peptide directing secretion. At Ser83 the chain carries Phosphoserine. Residues Asn157, Asn321, and Asn401 are each glycosylated (N-linked (GlcNAc...) asparagine). O-linked (Xyl...) (chondroitin sulfate) serine glycosylation occurs at Ser403.

It belongs to the serpin family. As to expression, detected in adult pituitary and adrenal gland.

The protein localises to the secreted. The protein resides in the cytoplasmic vesicle. It is found in the secretory vesicle lumen. Its subcellular location is the perikaryon. Serine protease inhibitor that inhibits plasminogen activators and plasmin but not thrombin. May be involved in the formation or reorganization of synaptic connections as well as for synaptic plasticity in the adult nervous system. May protect neurons from cell damage by tissue-type plasminogen activator. This chain is Neuroserpin (Serpini1), found in Rattus norvegicus (Rat).